We begin with the raw amino-acid sequence, 471 residues long: UDP-N-acetylmuramate--L-alanine ligase (471 aa).

114–120 (GTHGKTT) contacts ATP.

This sequence belongs to the MurCDEF family.

Its subcellular location is the cytoplasm. It carries out the reaction UDP-N-acetyl-alpha-D-muramate + L-alanine + ATP = UDP-N-acetyl-alpha-D-muramoyl-L-alanine + ADP + phosphate + H(+). The protein operates within cell wall biogenesis; peptidoglycan biosynthesis. Its function is as follows. Cell wall formation. This Rhizobium meliloti (strain 1021) (Ensifer meliloti) protein is UDP-N-acetylmuramate--L-alanine ligase.